The sequence spans 329 residues: Helicase VP6-A (329 aa).

2 disordered regions span residues 28–130 (NLVD…TNGG) and 189–232 (DLRR…SEEP). 3 stretches are compositionally biased toward basic and acidic residues: residues 36 to 58 (EGGKEDKTEPKEESKAEGSKDGE), 65 to 83 (GQKEEGGKETKDADVDRRI), and 96 to 109 (SGERANENANRGDG). ATP is bound at residue Lys110. Gly residues predominate over residues 110–129 (KVGGGGGDADAGVGATGTNG). 2 stretches are compositionally biased toward basic and acidic residues: residues 189 to 207 (DLRRKEKNGTHAKAVERGG) and 215 to 232 (HGDAQREGVEEEKTSEEP).

This sequence belongs to the reoviruses VP6 family. In terms of assembly, homohexamer.

Its subcellular location is the virion. The catalysed reaction is ATP + H2O = ADP + phosphate + H(+). Its function is as follows. ATP dependent RNA helicase essential for RNA packaging and viral transcription. Possesses ss- and dsRNA-binding capacity. The sequence is that of Helicase VP6-A (Segment-9) from Bluetongue virus 10 (isolate USA) (BTV 10).